The primary structure comprises 745 residues: Fatty acid oxidation complex subunit alpha (745 aa).

The segment at 47–209 is enoyl-CoA hydratase; the sequence is VNTLKAKFAE…KMGLVDDVVP (163 aa). The tract at residues 325-745 is 3-hydroxyacyl-CoA dehydrogenase; the sequence is RAIHRVGVLG…LDEAAITAHN (421 aa).

The protein in the N-terminal section; belongs to the enoyl-CoA hydratase/isomerase family. This sequence in the central section; belongs to the 3-hydroxyacyl-CoA dehydrogenase family. Heterotetramer of two alpha chains (FadJ) and two beta chains (FadI).

It is found in the cytoplasm. The catalysed reaction is a (3S)-3-hydroxyacyl-CoA = a (2E)-enoyl-CoA + H2O. The enzyme catalyses a 4-saturated-(3S)-3-hydroxyacyl-CoA = a (3E)-enoyl-CoA + H2O. It carries out the reaction a (3S)-3-hydroxyacyl-CoA + NAD(+) = a 3-oxoacyl-CoA + NADH + H(+). It catalyses the reaction (3S)-3-hydroxybutanoyl-CoA = (3R)-3-hydroxybutanoyl-CoA. The protein operates within lipid metabolism; fatty acid beta-oxidation. Functionally, catalyzes the formation of a hydroxyacyl-CoA by addition of water on enoyl-CoA. Also exhibits 3-hydroxyacyl-CoA epimerase and 3-hydroxyacyl-CoA dehydrogenase activities. This chain is Fatty acid oxidation complex subunit alpha, found in Yersinia enterocolitica serotype O:8 / biotype 1B (strain NCTC 13174 / 8081).